A 368-amino-acid polypeptide reads, in one-letter code: MVKPTKSNIGVYTNPAHDLWVAEAEPSLEQVQTGEKLAPGEVTVAVKSTGICGSDVHFWHAGCIGPMIVEDDHILGHESAGVVVAVHENVKSLKVGDRVAIEPNIICGECEPCLTGRYNGCDSVLFRSTPPVPGLLRRYVNHPAMWCHKIGDMSYENGSLLEPLSVALAGVQRAEVRLGDPILVCGAGPIGLVTLACVKAAGAEPIIITDIDEGRLAFAKEFCPSVRTHKVDFKHTPEDFAKAITELGGGVEPAIALECTGVESSIAGAIQTVKFGGKVFVIGVGKNEIKIPFMRLSTREVDLQFQYRYANTWPRAIRLLQGGVINLEKLVTHRFKIEDALEAFKTAADPKTGAIKVQIQSFEEGESR.

8 residues coordinate Zn(2+): Cys52, His77, Glu78, Cys107, Cys110, Cys113, Cys121, and Glu162. Residues Asp210, Arg215, and Ile282 each coordinate NAD(+).

This sequence belongs to the zinc-containing alcohol dehydrogenase family. Homotetramer. Requires Zn(2+) as cofactor.

It carries out the reaction L-arabinitol + NAD(+) = L-xylulose + NADH + H(+). Plays a key role in liamocins biosynthesis by providing the arabinol moity that is linked to 3,5-dihydroxydecanoic acid (provided by the HR-PKS PKS1) via ester bond formation catalyzed by the esterase EST1. In Aureobasidium melanogenum (Aureobasidium pullulans var. melanogenum), this protein is L-arabinitol 4-dehydrogenase.